Here is a 185-residue protein sequence, read N- to C-terminus: Urease accessory protein UreE (185 aa).

Residues 153–185 (LRANSAQGHGHSHSHSHDHHGYHHHGDGHWHKH) form a disordered region. Residues 162 to 175 (GHSHSHSHDHHGYH) are compositionally biased toward basic residues. Positions 176–185 (HHGDGHWHKH) are enriched in basic and acidic residues.

The protein belongs to the UreE family.

It localises to the cytoplasm. Involved in urease metallocenter assembly. Binds nickel. Probably functions as a nickel donor during metallocenter assembly. This is Urease accessory protein UreE from Haemophilus influenzae (strain 86-028NP).